The chain runs to 114 residues: Period circadian protein (114 aa).

Residues 23-114 (VTNTSIAGTG…VTLTESLLNK (92 aa)) form a disordered region. Repeat copies occupy residues 30–31 (GT), 33–34 (GT), 36–37 (GT), 38–39 (GT), 40–41 (GT), 42–43 (GT), 44–45 (GT), 46–47 (GT), 48–49 (GT), 50–51 (GT), 52–53 (GT), 54–55 (GT), 56–57 (GT), and 58–59 (GT). Over residues 30 to 79 (GTGGTGGTGTGTGTGTGTGTGTGTGTGTGTDTGTGTGTGTETGTGTGTGT) the composition is skewed to gly residues. The interval 30 to 87 (GTGGTGGTGTGTGTGTGTGTGTGTGTGTGTDTGTGTGTGTETGTGTGTGTRNGTNSGT) is 28 X 2 AA approximate tandem repeats of G-[TN]. The stretch at 60 to 61 (DT) is one 15; approximate repeat. 4 tandem repeats follow at residues 62–63 (GT), 64–65 (GT), 66–67 (GT), and 68–69 (GT). The 20; approximate repeat unit spans residues 70 to 71 (ET). Tandem repeats lie at residues 72 to 73 (GT), 74 to 75 (GT), 76 to 77 (GT), and 78 to 79 (GT). A 25; approximate repeat occupies 80 to 81 (RN). Low complexity predominate over residues 80-91 (RNGTNSGTKTGT). Repeat 26 spans residues 82-83 (GT). The stretch at 84 to 85 (NS) is one 27; approximate repeat. Repeat 28 spans residues 86–87 (GT). Positions 105-114 (VTLTESLLNK) are enriched in polar residues.

As to quaternary structure, forms a heterodimer with timeless (TIM); the complex then translocates into the nucleus. Phosphorylated with a circadian rhythmicity, probably by the double-time protein (dbt). Phosphorylation could be implicated in the stability of per monomer and in the formation of heterodimer per-tim.

Its subcellular location is the nucleus. The protein resides in the cytoplasm. The protein localises to the perinuclear region. In terms of biological role, essential for biological clock functions. Determines the period length of circadian and ultradian rhythms; an increase in PER dosage leads to shortened circadian rhythms and a decrease leads to lengthened circadian rhythms. Essential for the circadian rhythmicity of locomotor activity, eclosion behavior, and for the rhythmic component of the male courtship song that originates in the thoracic nervous system. The biological cycle depends on the rhythmic formation and nuclear localization of the TIM-PER complex. Light induces the degradation of TIM, which promotes elimination of PER. Nuclear activity of the heterodimer coordinatively regulates PER and TIM transcription through a negative feedback loop. Behaves as a negative element in circadian transcriptional loop. Does not appear to bind DNA, suggesting indirect transcriptional inhibition. In Drosophila orena (Fruit fly), this protein is Period circadian protein (per).